A 261-amino-acid chain; its full sequence is (R)-S-adenosyl-L-methionine hydrolase (261 aa).

Adenosine is bound by residues Asp-12, Asp-72, and Asn-187. (R)-S-adenosyl-L-methionine-binding residues include Asn-187, Ser-231, and Val-239. Residue Val-239 coordinates adenosine.

This sequence belongs to the SAM hydrolase / SAM-dependent halogenase family.

The catalysed reaction is (R)-S-adenosyl-L-methionine + H2O = adenosine + L-methionine + H(+). With respect to regulation, activity is inhibited by chloride. Its function is as follows. Catalyzes the hydrolysis of S-adenosyl-L-methionine (SAM) into adenosine and L-methionine. Is likely stereoselective, specifically hydrolyzing (R)-S-adenosyl-L-methionine ((R)-SAM), the inactive form of the ubiquitous cofactor SAM, and not the active form of SAM, (S)-S-adenosyl-L-methionine. Probaly plays a role in preventing accumulation of (R)-S-adenosyl-L-methionine in cells; maintenance of (S)-S-denosyl-L-methionine homochirality is important for cellular health given that the (R)-form is largely inactive as a methyl donor and can function as an inhibitor of methyltransferases. Shows very slow iodinase activity in vitro. The sequence is that of (R)-S-adenosyl-L-methionine hydrolase from Salinispora arenicola (strain CNS-205).